Reading from the N-terminus, the 210-residue chain is Orotate phosphoribosyltransferase (210 aa).

5-phospho-alpha-D-ribose 1-diphosphate-binding positions include Arg94, Lys98, His100, and 120-128; that span reads EDLISTGGS. Ser124 provides a ligand contact to orotate.

Belongs to the purine/pyrimidine phosphoribosyltransferase family. PyrE subfamily. Homodimer. The cofactor is Mg(2+).

The enzyme catalyses orotidine 5'-phosphate + diphosphate = orotate + 5-phospho-alpha-D-ribose 1-diphosphate. Its pathway is pyrimidine metabolism; UMP biosynthesis via de novo pathway; UMP from orotate: step 1/2. Catalyzes the transfer of a ribosyl phosphate group from 5-phosphoribose 1-diphosphate to orotate, leading to the formation of orotidine monophosphate (OMP). The protein is Orotate phosphoribosyltransferase of Bacillus cereus (strain G9842).